A 158-amino-acid chain; its full sequence is Transcriptional repressor NrdR (158 aa).

Residues 3-34 (CPFCGNADTQVVDSRVSEEGDTIRRRRRCLSC) fold into a zinc finger. The ATP-cone domain maps to 49–139 (PSVVKRNGSR…VYKNFEDIGE (91 aa)).

It belongs to the NrdR family. Zn(2+) serves as cofactor.

In terms of biological role, negatively regulates transcription of bacterial ribonucleotide reductase nrd genes and operons by binding to NrdR-boxes. The protein is Transcriptional repressor NrdR of Bordetella petrii (strain ATCC BAA-461 / DSM 12804 / CCUG 43448).